A 569-amino-acid polypeptide reads, in one-letter code: MRASQWFLVTQKETPNDAEIASHQLMLRSGMIRKLGSGLYTWMPLGLRVLRKVENIVREEMNKTHAMELLMPSVQPAELWQETGRWETFGGQLLTMKDSNQREYCFGPTHEEVITDIMRNELQSYKQLPVNFYQIQTKFRDEIRPRFGVMRAREFIMKDAYSFHLSLESLQETYKDMYQAYCRIFDRMGLKYRAVEADTGAIGGSASHEFQVLAESGEDLIFYSDASDYAANIEQATSLKPPKANQSCNETITLVDTPNKKTIDEVASFLGIASNQTIKTLIVKGKEHPMVALVLRGDDELNEVKATKHPLVHSPLSFIDEELILKTLKTPLGSIGPVKLNIPVIVDHQALAMPSFVCGANQADKHFINAAWERDAKYDDAYDLRNVKEGDPSPDGRGTLHCCRGIEVGHVFQLGDKYAKAMNASVINEQGQLQTMIMGCYGLGITRVVAAAIEQHHDEHGIIWPQALAPFQVNIIPLNGARSHAVKEQAESLYQQLKSHGIDVLLDDRNERAGVLFADNDLIGIPHRLVVSERNLEQGCIEYKSRTSSETQLINLDKVVNFIIELINK.

Belongs to the class-II aminoacyl-tRNA synthetase family. ProS type 1 subfamily. In terms of assembly, homodimer.

It is found in the cytoplasm. The catalysed reaction is tRNA(Pro) + L-proline + ATP = L-prolyl-tRNA(Pro) + AMP + diphosphate. Functionally, catalyzes the attachment of proline to tRNA(Pro) in a two-step reaction: proline is first activated by ATP to form Pro-AMP and then transferred to the acceptor end of tRNA(Pro). As ProRS can inadvertently accommodate and process non-cognate amino acids such as alanine and cysteine, to avoid such errors it has two additional distinct editing activities against alanine. One activity is designated as 'pretransfer' editing and involves the tRNA(Pro)-independent hydrolysis of activated Ala-AMP. The other activity is designated 'posttransfer' editing and involves deacylation of mischarged Ala-tRNA(Pro). The misacylated Cys-tRNA(Pro) is not edited by ProRS. The protein is Proline--tRNA ligase of Legionella pneumophila (strain Lens).